A 574-amino-acid polypeptide reads, in one-letter code: Phosphoenolpyruvate-protein phosphotransferase (574 aa).

Histidine 190 acts as the Tele-phosphohistidine intermediate in catalysis. Phosphoenolpyruvate contacts are provided by arginine 297 and arginine 333. Residues glutamate 432 and aspartate 456 each coordinate Mg(2+). Residues 455–456 (ND) and arginine 466 each bind phosphoenolpyruvate. The active-site Proton donor is the cysteine 503.

It belongs to the PEP-utilizing enzyme family. As to quaternary structure, homodimer. It depends on Mg(2+) as a cofactor.

The protein resides in the cytoplasm. The enzyme catalyses L-histidyl-[protein] + phosphoenolpyruvate = N(pros)-phospho-L-histidyl-[protein] + pyruvate. General (non sugar-specific) component of the phosphoenolpyruvate-dependent sugar phosphotransferase system (sugar PTS). This major carbohydrate active-transport system catalyzes the phosphorylation of incoming sugar substrates concomitantly with their translocation across the cell membrane. Enzyme I transfers the phosphoryl group from phosphoenolpyruvate (PEP) to the phosphoryl carrier protein (HPr). The protein is Phosphoenolpyruvate-protein phosphotransferase (ptsI) of Latilactobacillus sakei (Lactobacillus sakei).